Here is a 46-residue protein sequence, read N- to C-terminus: Protein PsbN (46 aa).

The chain crosses the membrane as a helical span at residues 10-30 (VAIAVLAALLGLTGFGVYTAF).

The protein belongs to the PsbN family.

It localises to the cellular thylakoid membrane. Functionally, may play a role in photosystem I and II biogenesis. In Synechococcus sp. (strain WH7803), this protein is Protein PsbN.